The sequence spans 162 residues: MNPAISVALLLSVLQVSRGQKVTSLTACLVNQNLRLDCRHENNTKDNSIQHEFSLTREKRKHVLSGTLGIPEHTYRSRVTLSNQPYIKVLTLANFTTKDEGDYFCELQVSGANPMSSNKSISVYRDKLVKCGGISLLVQNTSWMLLLLLSLSLLQALDFISL.

Residues 1 to 19 (MNPAISVALLLSVLQVSRG) form the signal peptide. Q20 is modified (pyrrolidone carboxylic acid). The 108-residue stretch at 20 to 127 (QKVTSLTACL…NKSISVYRDK (108 aa)) folds into the Ig-like V-type domain. 2 disulfides stabilise this stretch: C28–C131 and C38–C105. 3 N-linked (GlcNAc...) asparagine glycosylation sites follow: N42, N94, and N118. A lipid anchor (GPI-anchor amidated cysteine; alternate) is attached at C131. A propeptide spans 132-162 (GGISLLVQNTSWMLLLLLSLSLLQALDFISL) (removed in mature form).

It is found in the cell membrane. In terms of biological role, may play a role in cell-cell or cell-ligand interactions during synaptogenesis and other events in the brain. This Mus musculus (Mouse) protein is Thy-1 membrane glycoprotein (Thy1).